We begin with the raw amino-acid sequence, 287 residues long: Ribosomal RNA small subunit methyltransferase A (287 aa).

S-adenosyl-L-methionine-binding residues include Asn28, Leu30, Gly55, Glu77, Asp103, and Asn123.

Belongs to the class I-like SAM-binding methyltransferase superfamily. rRNA adenine N(6)-methyltransferase family. RsmA subfamily.

It localises to the cytoplasm. It carries out the reaction adenosine(1518)/adenosine(1519) in 16S rRNA + 4 S-adenosyl-L-methionine = N(6)-dimethyladenosine(1518)/N(6)-dimethyladenosine(1519) in 16S rRNA + 4 S-adenosyl-L-homocysteine + 4 H(+). Specifically dimethylates two adjacent adenosines (A1518 and A1519) in the loop of a conserved hairpin near the 3'-end of 16S rRNA in the 30S particle. May play a critical role in biogenesis of 30S subunits. This chain is Ribosomal RNA small subunit methyltransferase A, found in Nitrobacter winogradskyi (strain ATCC 25391 / DSM 10237 / CIP 104748 / NCIMB 11846 / Nb-255).